We begin with the raw amino-acid sequence, 1229 residues long: Alpha,alpha-trehalose-phosphate synthase [UDP-forming] 2 (1229 aa).

Residues 196-233 (VSSDSEGEEAIHNVRSGTHTESESEEDPKAPRSGLATS) form a disordered region. A compositionally biased stretch (basic and acidic residues) spans 213-225 (THTESESEEDPKA).

In the N-terminal section; belongs to the glycosyltransferase 20 family. It in the C-terminal section; belongs to the gob-1 trehalose phosphatase family.

It catalyses the reaction D-glucose 6-phosphate + UDP-alpha-D-glucose = alpha,alpha-trehalose 6-phosphate + UDP + H(+). Catalyzes the production of trehalose from glucose-6-phosphate and UDP-alpha-D-glucose in a 2 step process. The sequence is that of Alpha,alpha-trehalose-phosphate synthase [UDP-forming] 2 (tps-2) from Caenorhabditis elegans.